The chain runs to 404 residues: Ubiquitin-like modifier-activating enzyme 5 (404 aa).

Residue Ser45 is modified to Phosphoserine. Gly83, Asp104, Lys127, Asn150, and Asn184 together coordinate ATP. Positions 226 and 229 each coordinate Zn(2+). The Glycyl thioester intermediate role is filled by Cys250. Cys303 and Cys308 together coordinate Zn(2+). The UFM1-interacting sequence (UIS) motif lies at 334–346; it reads IIHEDNEWGIELV. The segment at 347 to 377 is linker; sequence SEVSEEELKNSSGPVPDLPEGITVAYTIPKK. Phosphoserine occurs at positions 358 and 393. The UFC1-binding sequence (UFC) signature appears at 389-404; it reads DSGESLEDLMAKMKNM.

The protein belongs to the ubiquitin-activating E1 family. UBA5 subfamily. In terms of assembly, homodimer; homodimerization is required for UFM1 activation. Interacts (via UIS motif) with UFM1; binds UFM1 via a trans-binding mechanism in which UFM1 interacts with distinct sites in both subunits of the UBA5 homodimer. Interacts (via C-terminus) with UFC1. Interacts (via UIS motif) with GABARAPL2 and, with lower affinity, with GABARAP and GABARAPL1.

The protein resides in the cytoplasm. Its subcellular location is the nucleus. The protein localises to the endoplasmic reticulum membrane. It is found in the golgi apparatus. Functionally, E1-like enzyme which specifically catalyzes the first step in ufmylation. Activates UFM1 by first adenylating its C-terminal glycine residue with ATP, and thereafter linking this residue to the side chain of a cysteine residue in E1, yielding a UFM1-E1 thioester and free AMP. Activates UFM1 via a trans-binding mechanism, in which UFM1 interacts with distinct sites in both subunits of the UBA5 homodimer. Trans-binding also promotes stabilization of the UBA5 homodimer, and enhances ATP-binding. Transfer of UFM1 from UBA5 to the E2-like enzyme UFC1 also takes place using a trans mechanism. Ufmylation plays a key role in various processes, such as ribosome recycling, response to DNA damage, interferon response or reticulophagy (also called ER-phagy). Ufmylation is essential for erythroid differentiation of both megakaryocytes and erythrocytes. The sequence is that of Ubiquitin-like modifier-activating enzyme 5 from Pongo abelii (Sumatran orangutan).